The primary structure comprises 531 residues: Inactive beta-amylase 4, chloroplastic (531 aa).

A chloroplast-targeting transit peptide spans 1 to 62; that stretch reads MTETGVIGCG…KRGRFITKLR (62 aa).

This sequence belongs to the glycosyl hydrolase 14 family. As to expression, preferentially expressed in vascular tissue of cotyledons, leaves, petioles, stems, petals, siliques and roots, particularly in phloem. Also present in root tip.

The protein localises to the plastid. Its subcellular location is the chloroplast. No alpha-1,4-glucan hydrolase activity, including beta-amylase, alpha-amylase, a-glucosidase or alpha-amyloglucosidase. However, facilitates or regulates starch breakdown, especially at night, by a mechanism involving direct interaction with starch or other alpha-1,4-glucan. This Arabidopsis thaliana (Mouse-ear cress) protein is Inactive beta-amylase 4, chloroplastic (BAM4).